Consider the following 503-residue polypeptide: ATP synthase subunit alpha (503 aa).

Residue 169–176 (GDRGTGKT) coordinates ATP.

This sequence belongs to the ATPase alpha/beta chains family. In terms of assembly, F-type ATPases have 2 components, CF(1) - the catalytic core - and CF(0) - the membrane proton channel. CF(1) has five subunits: alpha(3), beta(3), gamma(1), delta(1), epsilon(1). CF(0) has three main subunits: a(1), b(2) and c(9-12). The alpha and beta chains form an alternating ring which encloses part of the gamma chain. CF(1) is attached to CF(0) by a central stalk formed by the gamma and epsilon chains, while a peripheral stalk is formed by the delta and b chains.

The protein localises to the cell inner membrane. The catalysed reaction is ATP + H2O + 4 H(+)(in) = ADP + phosphate + 5 H(+)(out). In terms of biological role, produces ATP from ADP in the presence of a proton gradient across the membrane. The alpha chain is a regulatory subunit. This is ATP synthase subunit alpha from Leptospira interrogans serogroup Icterohaemorrhagiae serovar copenhageni (strain Fiocruz L1-130).